Here is a 363-residue protein sequence, read N- to C-terminus: 3-isopropylmalate dehydrogenase (363 aa).

78–91 (GPKWEHLPPDQQPE) is a binding site for NAD(+). Substrate-binding residues include arginine 99, arginine 109, arginine 138, and aspartate 227. Mg(2+) contacts are provided by aspartate 227, aspartate 251, and aspartate 255. 285–297 (GSAPDIAGKNIAN) is a binding site for NAD(+).

This sequence belongs to the isocitrate and isopropylmalate dehydrogenases family. LeuB type 1 subfamily. Homodimer. It depends on Mg(2+) as a cofactor. Requires Mn(2+) as cofactor.

It localises to the cytoplasm. It carries out the reaction (2R,3S)-3-isopropylmalate + NAD(+) = 4-methyl-2-oxopentanoate + CO2 + NADH. Its pathway is amino-acid biosynthesis; L-leucine biosynthesis; L-leucine from 3-methyl-2-oxobutanoate: step 3/4. Its function is as follows. Catalyzes the oxidation of 3-carboxy-2-hydroxy-4-methylpentanoate (3-isopropylmalate) to 3-carboxy-4-methyl-2-oxopentanoate. The product decarboxylates to 4-methyl-2 oxopentanoate. The sequence is that of 3-isopropylmalate dehydrogenase from Escherichia coli O157:H7.